Reading from the N-terminus, the 82-residue chain is Small ribosomal subunit protein uS17 (82 aa).

The protein belongs to the universal ribosomal protein uS17 family. Part of the 30S ribosomal subunit.

Functionally, one of the primary rRNA binding proteins, it binds specifically to the 5'-end of 16S ribosomal RNA. The sequence is that of Small ribosomal subunit protein uS17 from Shewanella frigidimarina (strain NCIMB 400).